A 248-amino-acid polypeptide reads, in one-letter code: Allergin-1 (248 aa).

An N-terminal signal peptide occupies residues Met-1–Ser-33. The Extracellular segment spans residues Ile-34 to Ser-150. An Ig-like C2-type domain is found at Pro-54–Thr-137. Residue Asn-68 is glycosylated (N-linked (GlcNAc...) asparagine). Cys-73 and Cys-120 are oxidised to a cystine. Asn-135 carries N-linked (GlcNAc...) asparagine glycosylation. The helical transmembrane segment at Leu-151–Leu-171 threads the bilayer. Residues Lys-172–Tyr-248 lie on the Cytoplasmic side of the membrane. Short sequence motifs (ITIM motif) lie at residues Ile-216–Pro-221 and Tyr-241–Leu-246. Tyr-218 and Tyr-243 each carry phosphotyrosine.

In terms of assembly, monomer. Interacts (tyrosine-phosphorylated) with PTPN6, PTPN11 and INPP5D. In terms of processing, N-glycosylated. Mast cell-specific. Expressed in primary and transformed mast cells.

The protein resides in the cell membrane. Its function is as follows. Immunoglobulin-like receptor which plays an inhibitory role in degranulation of mast cells. Negatively regulates IgE-mediated mast cell activation and suppresses the type I immediate hypersensitivity reaction. In Rattus norvegicus (Rat), this protein is Allergin-1 (Milr1).